The chain runs to 151 residues: MVKAICVVKGAVVNGTIIFSQENEGSPVYVNGTISGLSGGLHGFHIHEFGDTSNGCLSAGAHFNPFHVEHGGPNSAIRHVGDLGNITSCPSSKVANVLIQDNVISLFGDLSIIGRTLVVHENQDDLGLGGNLSKTTGNAGARVACGILAKI.

3 residues coordinate Cu cation: histidine 45, histidine 47, and histidine 62. Cysteine 56 and cysteine 145 are joined by a disulfide. The Zn(2+) site is built by histidine 62, histidine 70, histidine 79, and aspartate 82. Histidine 120 lines the Cu cation pocket.

Belongs to the Cu-Zn superoxide dismutase family. Homodimer. Cu cation is required as a cofactor. It depends on Zn(2+) as a cofactor.

It is found in the cytoplasm. The enzyme catalyses 2 superoxide + 2 H(+) = H2O2 + O2. Functionally, destroys radicals which are normally produced within the cells and which are toxic to biological systems. Protects spores from cellular damage caused by UV LIGHT. This Dictyostelium discoideum (Social amoeba) protein is Superoxide dismutase [Cu-Zn] 4 (sodD).